Here is a 554-residue protein sequence, read N- to C-terminus: Protein PNS1 (554 aa).

2 stretches are compositionally biased toward low complexity: residues 1 to 19 (MSGP…NNNN) and 27 to 45 (SYQM…QPQY). The disordered stretch occupies residues 1–90 (MSGPQYGAQP…TDGYGGPPPS (90 aa)). Topologically, residues 1–105 (MSGPQYGAQP…KVQKPKYNDW (105 aa)) are cytoplasmic. Positions 68 to 90 (PQGPPPNGSKPPPTDGYGGPPPS) are enriched in pro residues. The helical transmembrane segment at 106 to 126 (WAGLLFLATVAGFVAVSAISI) threads the bilayer. Residues 127–153 (HGYADNRSQNNGSLNGQRNTFGLTTHT) lie on the Extracellular side of the membrane. 2 N-linked (GlcNAc...) asparagine glycosylation sites follow: N132 and N137. The chain crosses the membrane as a helical span at residues 154 to 174 (IYLFVWVLICAIVLSYAYMWM). The Cytoplasmic portion of the chain corresponds to 175–181 (ARKFTKQ). Residues 182 to 202 (FIYATGILNIVMGLVTALYML) traverse the membrane as a helical segment. Residues 203–206 (SRKY) lie on the Extracellular side of the membrane. A helical transmembrane segment spans residues 207–227 (WSGGIVFLIFVVLQALFFWSC). At 228–255 (RSRIPFSTLMLQTAIDVSKVHGHVYLVS) the chain is on the cytoplasmic side. Residues 256–276 (AVGGVIGTLFAAYWAITLVAV) form a helical membrane-spanning segment. Over 277–297 (YVKFEPDPNNAACRNAGGCSS) the chain is Extracellular. Residues 298 to 318 (GKVIGLIVFITFAGYWISEWL) traverse the membrane as a helical segment. Over 319 to 352 (KNTIHTTVAGIYGSWYFNSRNYPTKVTRGALKRS) the chain is Cytoplasmic. Residues 353 to 373 (LTYSFGSISLGSLFIAIINLI) form a helical membrane-spanning segment. At 374 to 389 (RQLAQAAQQNAAQEGD) the chain is on the extracellular side. A helical transmembrane segment spans residues 390–410 (ILGTILWCIFGCLIGILDWLV). The Cytoplasmic segment spans residues 411–451 (EFINRYAFCHIALYGKAYFAAAKDTWKMVKDRGIDALINEC). A helical membrane pass occupies residues 452–472 (LIGPVLTFGATFVAYACGLIA). Residues 473-487 (YLYMVYTKPAYNDGG) lie on the Extracellular side of the membrane. The chain crosses the membrane as a helical span at residues 488–508 (GFTPVVVAFAFLIGLQVCNVF). The Cytoplasmic portion of the chain corresponds to 509 to 554 (TTPLTSGIDTIFVAMAWDPEVLMRDHPDLYHRMVQVYPHVQEAIHA).

This sequence belongs to the CTL (choline transporter-like) family.

It localises to the cell membrane. Probably involved in transport through the plasma membrane. In Neurospora crassa (strain ATCC 24698 / 74-OR23-1A / CBS 708.71 / DSM 1257 / FGSC 987), this protein is Protein PNS1 (pns-1).